The sequence spans 245 residues: Probable transcriptional regulatory protein Ddes_0536 (245 aa).

A disordered region spans residues 1 to 21 (MAGHSKWANIQHRKGRQDAKR).

It belongs to the TACO1 family.

The protein resides in the cytoplasm. This is Probable transcriptional regulatory protein Ddes_0536 from Desulfovibrio desulfuricans (strain ATCC 27774 / DSM 6949 / MB).